The chain runs to 308 residues: Zinc finger CCCH domain-containing protein 15 (308 aa).

The disordered stretch occupies residues 1-21 (MENKIAPFSYSGSSAGNSSSG). The span at 9-21 (SYSGSSAGNSSSG) shows a compositional bias: low complexity. A coiled-coil region spans residues 56-91 (TRLHEASLEAEALRLENTELRSMNLRLKNELNSLIR). The disordered stretch occupies residues 110–190 (LSIGGNDADE…GTVTKPGTCG (81 aa)). Ser-111 is subject to Phosphoserine. A compositionally biased stretch (polar residues) spans 148 to 164 (RSSLPKSISVRSNGYSK). 2 consecutive C3H1-type zinc fingers follow at residues 222-250 (MTKTELCNKWQETGTCPYGDHCQFAHGIK) and 260-288 (RYKTEVCRMVLAGDNCPYGHRCHFRHSLS).

Post-translationally, phosphorylated at Ser-111 by ASK7/BIN2 in the cytoplasm in the absence of brassinosteroids (BRs). As to expression, highly expressed in secondary cell wall-forming tissues and the xylem cells of roots. Expressed predominantly in inflorescence stems, flowers and siliques. Highly expressed in the basal portion of stems, where cells are undergoing secondary cell wall thickening. Highly expressed in meiocytes and tapetum from anthers.

It localises to the cytoplasm. Its subcellular location is the nucleus. Functionally, functions probably as a transcriptional factor that activates genes involved in secondary cell wall biosynthesis. Functions redudantly with C3H14 to regulate secondary cell wall formation. C3H14 and C3H15 have overlapping roles in the regulation of secondary cell wall formation and anther development. C3H14 may contribute more to secondary cell wall thickening while C3H15 could be more important in anther development. May regulate at both the transcriptional and post-transcriptional levels the expression of many genes involved in various biological processes, particularly those associated with cell wall metabolism and pollen development. Involved in the regulation of callose metabolism in male meiocytes, in integrity of newly formed microspores, and promotes male fertility. May be involved in the regulation of the callose synthesis genes CALS5 and CALS12, the potential degradation of callose walls-related genes A6 and MYB80, as well as other putative beta-1,3-glucanase genes. Negatively regulates cell elongation by inhibiting brassinosteroid (BR) signaling. Functions downstream of the BRI1 receptor as a negative regulator in the BR pathway. This is Zinc finger CCCH domain-containing protein 15 from Arabidopsis thaliana (Mouse-ear cress).